The chain runs to 244 residues: Probable fimbrial assembly protein FimC, serogroup H1 (244 aa).

The sequence is that of Probable fimbrial assembly protein FimC, serogroup H1 (fimC) from Dichelobacter nodosus (Bacteroides nodosus).